The sequence spans 290 residues: MDKIIKSIAQSGAFRAYVLDSTETVALAQEKHNTLSSSTVALGRTLIANQILAANQKGDSKITVKVIGDSSFGHIISVADTKGHVKGYIQNTGVDIKKTETGEVLVGPFMGNGHFVTIIDYGTGNPYTSTTPLITGEIGEDFAYYLTESEQTPSAIGLNVLLDENDKVKVAGGFMVQVLPEASEEEIARYEKRLQEMPAISHLLASKNHVDALLEAIYGDEPYKRLSEEPLSFQCDCSRERFEAALMTLPKADLQAMIDEDKGAEIVCQFCGTKYQFNESDLEAIISDKA.

Disulfide bonds link Cys-235-Cys-237 and Cys-268-Cys-271.

This sequence belongs to the HSP33 family. In terms of processing, under oxidizing conditions two disulfide bonds are formed involving the reactive cysteines. Under reducing conditions zinc is bound to the reactive cysteines and the protein is inactive.

The protein localises to the cytoplasm. In terms of biological role, redox regulated molecular chaperone. Protects both thermally unfolding and oxidatively damaged proteins from irreversible aggregation. Plays an important role in the bacterial defense system toward oxidative stress. The chain is 33 kDa chaperonin from Streptococcus pyogenes serotype M49.